The following is a 129-amino-acid chain: Small ribosomal subunit protein uS12 (129 aa).

A 3-methylthioaspartic acid modification is found at Asp-89.

Belongs to the universal ribosomal protein uS12 family. As to quaternary structure, part of the 30S ribosomal subunit. Contacts proteins S8 and S17. May interact with IF1 in the 30S initiation complex.

Its function is as follows. With S4 and S5 plays an important role in translational accuracy. In terms of biological role, interacts with and stabilizes bases of the 16S rRNA that are involved in tRNA selection in the A site and with the mRNA backbone. Located at the interface of the 30S and 50S subunits, it traverses the body of the 30S subunit contacting proteins on the other side and probably holding the rRNA structure together. The combined cluster of proteins S8, S12 and S17 appears to hold together the shoulder and platform of the 30S subunit. In Rickettsia akari (strain Hartford), this protein is Small ribosomal subunit protein uS12.